A 298-amino-acid polypeptide reads, in one-letter code: ATP synthase gamma chain (298 aa).

The protein belongs to the ATPase gamma chain family. F-type ATPases have 2 components, CF(1) - the catalytic core - and CF(0) - the membrane proton channel. CF(1) has five subunits: alpha(3), beta(3), gamma(1), delta(1), epsilon(1). CF(0) has three main subunits: a, b and c.

The protein localises to the cell inner membrane. Functionally, produces ATP from ADP in the presence of a proton gradient across the membrane. The gamma chain is believed to be important in regulating ATPase activity and the flow of protons through the CF(0) complex. In Francisella tularensis subsp. holarctica (strain LVS), this protein is ATP synthase gamma chain.